Consider the following 449-residue polypeptide: Putative glycosyltransferase 7 (449 aa).

At 1–32 (MVSPETSSSHYQSSPMAKYAGTRTRPVVCISD) the chain is on the cytoplasmic side. A helical; Signal-anchor for type II membrane protein membrane pass occupies residues 33–53 (VVLFLGGAFMSLILVWSFFSF). Residues 54 to 449 (SSISPNLTVK…VPFDYPDEPW (396 aa)) are Lumenal-facing. N59, N123, and N332 each carry an N-linked (GlcNAc...) asparagine glycan.

It belongs to the glycosyltransferase 34 family.

The protein resides in the golgi apparatus membrane. Probable glycosyltransferase that may be involved in the biosynthesis of xyloglucan. The sequence is that of Putative glycosyltransferase 7 (GT7) from Arabidopsis thaliana (Mouse-ear cress).